Reading from the N-terminus, the 175-residue chain is MFLAAEGSHNPILPIWQELVVGTIAFALLVFVLLKFVMPRMETMYQARVDAIEGGLKRAEAAQAEANQLLEQYRAQLAEVRTEAARIRDDARADAEGIRQDILAKAREESDRIIAAGKEQLVAERTTIVRELRTEVGTLAVDLAGKIVGESLADEARRAGTVDRFLNGLESAGAR.

Residues 19–39 form a helical membrane-spanning segment; that stretch reads LVVGTIAFALLVFVLLKFVMP.

This sequence belongs to the ATPase B chain family. F-type ATPases have 2 components, F(1) - the catalytic core - and F(0) - the membrane proton channel. F(1) has five subunits: alpha(3), beta(3), gamma(1), delta(1), epsilon(1). F(0) has three main subunits: a(1), b(2) and c(10-14). The alpha and beta chains form an alternating ring which encloses part of the gamma chain. F(1) is attached to F(0) by a central stalk formed by the gamma and epsilon chains, while a peripheral stalk is formed by the delta and b chains.

The protein resides in the cell membrane. Its function is as follows. F(1)F(0) ATP synthase produces ATP from ADP in the presence of a proton or sodium gradient. F-type ATPases consist of two structural domains, F(1) containing the extramembraneous catalytic core and F(0) containing the membrane proton channel, linked together by a central stalk and a peripheral stalk. During catalysis, ATP synthesis in the catalytic domain of F(1) is coupled via a rotary mechanism of the central stalk subunits to proton translocation. Component of the F(0) channel, it forms part of the peripheral stalk, linking F(1) to F(0). The sequence is that of ATP synthase subunit b from Salinispora tropica (strain ATCC BAA-916 / DSM 44818 / JCM 13857 / NBRC 105044 / CNB-440).